Here is a 400-residue protein sequence, read N- to C-terminus: MGSLIQTPSTQTAVVTTAEGRHQVAHGRRVPSCGPRSVLVRIKAVALNATDHKMPARVKREGLTSGCDFAGEVVAVGEQANDEPRRCELPRSWAPGDRVFGVVYGSNPGQPEWGAFAEYVEADPIMLCHVPDGWDWETAASVGGSVHGSVALCLFGDGNLALDYSNLKAQADSSSADAVTNQSPKPESFTKEELRKVVLVYGGSTACGTMALQLLRLAGYTPITTCSPRNFGLVESYGAVAAFDYHSETCATEMKTYTRSSLVAALDCLGNTQSAALCYAALGRAGGRYVALEKYPDSVSATRKLVKPSWVMGPVMFGRELQLADGYSQPADLAARAFACDWYPLAERLVHQERLRAHPVTIAGPSPPVGDKWADAILCGLQELRDGSVSASKLVVPVAA.

50 to 53 lines the NADP(+) pocket; that stretch reads TDHK. Position 145–152 (145–152) interacts with substrate; it reads SVHGSVAL. NADP(+) is bound by residues 204–207, 227–230, Tyr-245, and 292–293; these read STAC, SPRN, and LE. 313–317 contributes to the substrate binding site; the sequence is GPVMF. 389–390 contributes to the NADP(+) binding site; sequence VS.

It belongs to the zinc-containing alcohol dehydrogenase family. Monomer.

Its pathway is mycotoxin biosynthesis. Functionally, trans-enoyl reductase; part of the gene cluster that mediates the biosynthesis of UCS1025A, a member of the pyrrolizidinone family that acts as a strong telomerase inhibitor and displays potent antibacterial and antitumor properties. These compounds share a hemiaminal-containing pyrrolizidinone core fused with a gamma-lactone, giving a furopyrrolizidine that is connected to a decalin fragment. The polyketide synthase module (PKS) of the PKS-NRPS ucsA is responsible for the synthesis of the polyketide backbone via the condensation of an acetyl-CoA starter unit with 6 malonyl-CoA units. The downstream nonribosomal peptide synthetase (NRPS) module then amidates the carboxyl end of the polyketide with a 2S,3S-methylproline derived from L-isoleucine by the 2-oxoglutarate-dependent dioxygenase ucsF which converts L-isoleucine to (4S,5S)-4-methylpyrroline-5-carboxylate that is further converted to 2S,3S-methylproline by the pyrroline-5-carboxylate reductase ucsG. Reductive release of the completed aminoacyl polyketide from the assembly line can form the 3-pyrrolin-2-one structure via an intramolecular Knoevenagel reaction. Because ucsA lacks a designated enoylreductase (ER) domain, the required activity is provided the enoyl reductase ucsL. This keto acyclic precursor is the substrate of the Diels-Alderase ucsH, that catalyzes the Diels-Alder cycloaddition. Oxidation of the 3S-methyl group to a carboxylate by the cytochrome P450 monooxygenase ucsK allows an oxa-Michael cyclization that might involve the reductase/dehydrogenase ucsI and which furnishes the furopyrrolizidine. The oxidase ucsJ likely plays a critical role in stereoselective reduction of the C5-C6 double bond to afford the required R-configured carboxylate group. Further enolization and oxidation at C5 by an unidentified enzyme affords the last intermediate that can undergo oxa-Michael cyclization to yield UCS1025A. The sequence is that of Trans-enoyl reductase ucsL from Acremonium sp.